The following is a 457-amino-acid chain: Biphenyl dioxygenase subunit alpha (457 aa).

One can recognise a Rieske domain in the interval 58–174 (WLMLGHETHI…VETYKGLVFA (117 aa)). 4 residues coordinate [2Fe-2S] cluster: Cys-100, His-102, Cys-120, and His-123. Fe cation-binding residues include His-233 and His-239.

It belongs to the bacterial ring-hydroxylating dioxygenase alpha subunit family. As to quaternary structure, heterohexamer consisting of three BphA subunits and three BphE subunits. A ferredoxin (BphF) and a ferredoxin reductase (BphG) must be present to obtain activity. The cofactor is [2Fe-2S] cluster. Fe cation is required as a cofactor.

The enzyme catalyses biphenyl + NADH + O2 + H(+) = (2R,3S)-3-phenylcyclohexa-3,5-diene-1,2-diol + NAD(+). The protein operates within xenobiotic degradation; biphenyl degradation; 2-hydroxy-2,4-pentadienoate and benzoate from biphenyl: step 1/4. This Comamonas testosteroni (Pseudomonas testosteroni) protein is Biphenyl dioxygenase subunit alpha (bphA).